Reading from the N-terminus, the 81-residue chain is Exodeoxyribonuclease 7 small subunit (81 aa).

This sequence belongs to the XseB family. Heterooligomer composed of large and small subunits.

Its subcellular location is the cytoplasm. It carries out the reaction Exonucleolytic cleavage in either 5'- to 3'- or 3'- to 5'-direction to yield nucleoside 5'-phosphates.. Functionally, bidirectionally degrades single-stranded DNA into large acid-insoluble oligonucleotides, which are then degraded further into small acid-soluble oligonucleotides. This Nitratidesulfovibrio vulgaris (strain ATCC 29579 / DSM 644 / CCUG 34227 / NCIMB 8303 / VKM B-1760 / Hildenborough) (Desulfovibrio vulgaris) protein is Exodeoxyribonuclease 7 small subunit.